The sequence spans 261 residues: uncharacterized protein (261 aa).

Its subcellular location is the plastid. The protein resides in the chloroplast. This is an uncharacterized protein from Mesostigma viride (Green alga).